Reading from the N-terminus, the 462-residue chain is Glutamate--tRNA ligase 1 (462 aa).

The 'HIGH' region signature appears at 8–18 (PSPTGYLHIGG). The 'KMSKS' region motif lies at 236–240 (KLSKR). Lys239 serves as a coordination point for ATP.

It belongs to the class-I aminoacyl-tRNA synthetase family. Glutamate--tRNA ligase type 1 subfamily. Monomer.

Its subcellular location is the cytoplasm. It carries out the reaction tRNA(Glu) + L-glutamate + ATP = L-glutamyl-tRNA(Glu) + AMP + diphosphate. Its function is as follows. Catalyzes the attachment of glutamate to tRNA(Glu) in a two-step reaction: glutamate is first activated by ATP to form Glu-AMP and then transferred to the acceptor end of tRNA(Glu). This Sulfurovum sp. (strain NBC37-1) protein is Glutamate--tRNA ligase 1.